Here is a 139-residue protein sequence, read N- to C-terminus: MPAALLPGAGCPCGRLGASGKPLAFAQCCGRYLDDFAGTPAPDAESLMRSRYCAFVRERADYLLATWHASQRPPSIDFDPGVKWLGLEVRQHRQLDATHAEVEFVARQKSPGSPAVRLHERSRFVHEAGRWYYVDGDTR.

The protein belongs to the UPF0225 family.

The sequence is that of UPF0225 protein Bpro_4182 from Polaromonas sp. (strain JS666 / ATCC BAA-500).